Here is a 113-residue protein sequence, read N- to C-terminus: Immunoglobulin lambda variable 2-23 (113 aa).

Positions 1 to 19 (MAWALLLLTLLTQDTGSWA) are cleaved as a signal peptide. At glutamine 20 the chain carries Pyrrolidone carboxylic acid. The segment at 20-44 (QSALTQPASVSGSPGQSITISCTGT) is framework-1. The 94-residue stretch at 20–113 (QSALTQPASV…EADYYCCSYA (94 aa)) folds into the Ig-like domain. A disulfide bridge connects residues cysteine 41 and cysteine 109. The tract at residues 45-53 (SSDVGSYNL) is complementarity-determining-1. The tract at residues 54–70 (VSWYQQHPGKAPKLMIY) is framework-2. The complementarity-determining-2 stretch occupies residues 71–73 (EGS). The disordered stretch occupies residues 73–92 (SKRPSGVSNRFSGSKSGNTA). The segment at 74-109 (KRPSGVSNRFSGSKSGNTASLTISGLQAEDEADYYC) is framework-3. Positions 78-92 (GVSNRFSGSKSGNTA) are enriched in polar residues. The interval 110–113 (CSYA) is complementarity-determining-3.

Immunoglobulins are composed of two identical heavy chains and two identical light chains; disulfide-linked.

It is found in the secreted. Its subcellular location is the cell membrane. Its function is as follows. V region of the variable domain of immunoglobulin light chains that participates in the antigen recognition. Immunoglobulins, also known as antibodies, are membrane-bound or secreted glycoproteins produced by B lymphocytes. In the recognition phase of humoral immunity, the membrane-bound immunoglobulins serve as receptors which, upon binding of a specific antigen, trigger the clonal expansion and differentiation of B lymphocytes into immunoglobulins-secreting plasma cells. Secreted immunoglobulins mediate the effector phase of humoral immunity, which results in the elimination of bound antigens. The antigen binding site is formed by the variable domain of one heavy chain, together with that of its associated light chain. Thus, each immunoglobulin has two antigen binding sites with remarkable affinity for a particular antigen. The variable domains are assembled by a process called V-(D)-J rearrangement and can then be subjected to somatic hypermutations which, after exposure to antigen and selection, allow affinity maturation for a particular antigen. This is Immunoglobulin lambda variable 2-23 from Homo sapiens (Human).